The following is a 432-amino-acid chain: D-amino acid dehydrogenase (432 aa).

Residue 3 to 17 coordinates FAD; that stretch reads VVILGSGVVGVTSAW.

This sequence belongs to the DadA oxidoreductase family. FAD serves as cofactor.

It carries out the reaction a D-alpha-amino acid + A + H2O = a 2-oxocarboxylate + AH2 + NH4(+). It participates in amino-acid degradation; D-alanine degradation; NH(3) and pyruvate from D-alanine: step 1/1. In terms of biological role, oxidative deamination of D-amino acids. In Salmonella choleraesuis (strain SC-B67), this protein is D-amino acid dehydrogenase.